A 497-amino-acid polypeptide reads, in one-letter code: Carboxylesterase (497 aa).

Catalysis depends on serine 185, which acts as the Acyl-ester intermediate. Residues glutamate 319 and histidine 415 each act as charge relay system in the active site.

Belongs to the type-B carboxylesterase/lipase family.

It is found in the secreted. It carries out the reaction a carboxylic ester + H2O = an alcohol + a carboxylate + H(+). The polypeptide is Carboxylesterase (Thermobifida fusca (Thermomonospora fusca)).